The primary structure comprises 91 residues: Small ribosomal subunit protein bS20 (91 aa).

Positions 1–28 (MANTASAEKRNRQAQKRRARNVQVRTGV) are disordered.

The protein belongs to the bacterial ribosomal protein bS20 family.

In terms of biological role, binds directly to 16S ribosomal RNA. The polypeptide is Small ribosomal subunit protein bS20 (Anaeromyxobacter dehalogenans (strain 2CP-1 / ATCC BAA-258)).